Consider the following 269-residue polypeptide: Formamidopyrimidine-DNA glycosylase (269 aa).

Residue Pro-2 is the Schiff-base intermediate with DNA of the active site. Glu-3 functions as the Proton donor in the catalytic mechanism. Lys-57 (proton donor; for beta-elimination activity) is an active-site residue. DNA is bound by residues His-90, Arg-109, and Arg-150. An FPG-type zinc finger spans residues 235-269; sequence QVYGKAGEQCPNCAELIQELKIGQRNTFYCSSCQV. Arg-259 acts as the Proton donor; for delta-elimination activity in catalysis.

Belongs to the FPG family. In terms of assembly, monomer. Zn(2+) serves as cofactor.

The catalysed reaction is Hydrolysis of DNA containing ring-opened 7-methylguanine residues, releasing 2,6-diamino-4-hydroxy-5-(N-methyl)formamidopyrimidine.. It catalyses the reaction 2'-deoxyribonucleotide-(2'-deoxyribose 5'-phosphate)-2'-deoxyribonucleotide-DNA = a 3'-end 2'-deoxyribonucleotide-(2,3-dehydro-2,3-deoxyribose 5'-phosphate)-DNA + a 5'-end 5'-phospho-2'-deoxyribonucleoside-DNA + H(+). Its function is as follows. Involved in base excision repair of DNA damaged by oxidation or by mutagenic agents. Acts as a DNA glycosylase that recognizes and removes damaged bases. Has a preference for oxidized purines, such as 7,8-dihydro-8-oxoguanine (8-oxoG). Has AP (apurinic/apyrimidinic) lyase activity and introduces nicks in the DNA strand. Cleaves the DNA backbone by beta-delta elimination to generate a single-strand break at the site of the removed base with both 3'- and 5'-phosphates. In Vibrio atlanticus (strain LGP32) (Vibrio splendidus (strain Mel32)), this protein is Formamidopyrimidine-DNA glycosylase.